The chain runs to 822 residues: Tubulin polyglutamylase TTLL6 (822 aa).

The interval 1-24 (MLQCLTSESEEGAEEREESSTEDL) is disordered. The span at 8–24 (ESEEGAEEREESSTEDL) shows a compositional bias: acidic residues. The TTL domain maps to 57-400 (KKRLVINLSN…GNCDKKKVLE (344 aa)). Residues lysine 174, 180–181 (QG), 202–205 (QLYI), and 215–217 (KFD) contribute to the ATP site. Glutamine 180 lines the a protein pocket. Arginine 241 is a binding site for L-glutamate. 263–264 (TN) contributes to the ATP binding site. L-glutamate is bound by residues tyrosine 265, serine 266, and lysine 283. Mg(2+)-binding residues include aspartate 346, glutamate 359, and asparagine 361. Histidine 362 is an a protein binding site. Positions 371–450 (KLDKEVKDSL…CGGFRLIYPG (80 aa)) are c-MTBD region. Residue lysine 377 participates in L-glutamate binding. 2 disordered regions span residues 736 to 772 (PLFP…SVFV) and 791 to 822 (TQAR…TATA). Over residues 802–814 (SHSGTTTRDSSTQ) the composition is skewed to polar residues.

This sequence belongs to the tubulin--tyrosine ligase family. In terms of assembly, found in a complex with CEP41. The cofactor is Mg(2+). Highly expressed in testis. Expressed in brain, heart, kidney, liver, lung, muscle and trachea. In the brain, specifically expressed in ependymal cilia.

It localises to the cytoplasm. The protein resides in the cytoskeleton. Its subcellular location is the cilium axoneme. It is found in the cilium basal body. The enzyme catalyses L-glutamyl-[protein] + L-glutamate + ATP = gamma-L-glutamyl-L-glutamyl-[protein] + ADP + phosphate + H(+). The catalysed reaction is (L-glutamyl)(n)-gamma-L-glutamyl-L-glutamyl-[protein] + L-glutamate + ATP = (L-glutamyl)(n+1)-gamma-L-glutamyl-L-glutamyl-[protein] + ADP + phosphate + H(+). Functionally, polyglutamylase which modifies both tubulin and non-tubulin proteins, generating alpha-linked polyglutamate side chains on the gamma-carboxyl group of specific glutamate residues of target proteins. Preferentially mediates ATP-dependent long polyglutamate chain elongation over the initiation step of the polyglutamylation reaction. Preferentially modifies the alpha-tubulin tail over a beta-tail. Promotes tubulin polyglutamylation which stimulates spastin/SPAST-mediated microtubule severing, thereby regulating microtubule functions. Mediates microtubule polyglutamylation in primary cilia axoneme which is important for ciliary structural formation and motility. Mediates microtubule polyglutamylation in motile cilia, necessary for the regulation of ciliary coordinated beating. Polyglutamylates non-tubulin protein nucleotidyltransferase CGAS, leading to CGAS DNA-binding inhibition, thereby preventing antiviral defense response. This chain is Tubulin polyglutamylase TTLL6, found in Mus musculus (Mouse).